Here is a 284-residue protein sequence, read N- to C-terminus: Diaminopimelate epimerase (284 aa).

The substrate site is built by Asn-14 and Asn-67. Cys-76 functions as the Proton donor in the catalytic mechanism. Residues 77-78, Asn-166, Asn-199, and 217-218 contribute to the substrate site; these read GN and ER. Residue Cys-226 is the Proton acceptor of the active site. Substrate is bound at residue 227–228; sequence GT.

The protein belongs to the diaminopimelate epimerase family. As to quaternary structure, homodimer.

Its subcellular location is the cytoplasm. It carries out the reaction (2S,6S)-2,6-diaminopimelate = meso-2,6-diaminopimelate. It functions in the pathway amino-acid biosynthesis; L-lysine biosynthesis via DAP pathway; DL-2,6-diaminopimelate from LL-2,6-diaminopimelate: step 1/1. In terms of biological role, catalyzes the stereoinversion of LL-2,6-diaminopimelate (L,L-DAP) to meso-diaminopimelate (meso-DAP), a precursor of L-lysine and an essential component of the bacterial peptidoglycan. The protein is Diaminopimelate epimerase of Bacillus pumilus (strain SAFR-032).